The primary structure comprises 3801 residues: MSTDSNSLAREFLTDVNRLCNAVVQRVEAREEEEEETHMATLGQYLVHGRGFLLLTKLNSIIDQALTCREELLTLLLSLLPLVWKIPVQEEKATDFNLPLSADIILTKEKNSSSQRSTQEKLHLEGSALSSQVSAKVNVFRKSRRQRKITHRYSVRDARKTQLSTSDSEANSDEKGIAMNKHRRPHLLHHFLTSFPKQDHPKAKLDRLATKEQTPPDAMALENSREIIPRQGSNTDILSEPAALSVISNMNNSPFDLCHVLLSLLEKVCKFDVTLNHNSPLAASVVPTLTEFLAGFGDCCSLSDNLESRVVSAGWTEEPVALIQRMLFRTVLHLLSVDVSTAEMMPENLRKNLTELLRAALKIRICLEKQPDPFAPRQKKTLQEVQEDFVFSKYRHRALLLPELLEGVLQILICCLQSAASNPFYFSQAMDLVQEFIQHHGFNLFETAVLQMEWLVLRDGVPPEASEHLKALINSVMKIMSTVKKVKSEQLHHSMCTRKRHRRCEYSHFMHHHRDLSGLLVSAFKNQVSKNPFEETADGDVYYPERCCCIAVCAHQCLRLLQQASLSSTCVQILSGVHNIGICCCMDPKSVIIPLLHAFKLPALKNFQQHILNILNKLILDQLGGAEISPKIKKAACNICTVDSDQLAQLEETLQGNLCDAELSSSLSSPSYRFQGILPSSGSEDLLWKWDALKAYQNFVFEEDRLHSIQIANHICNLIQKGNIVVQWKLYNYIFNPVLQRGVELAHHCQHLSVTSAQSHVCSHHNQCLPQDVLQIYVKTLPILLKSRVIRDLFLSCNGVSQIIELNCLNGIRSHSLKAFETLIISLGEQQKDASVPDIDGIDIEQKELSSVHVGTSFHHQQAYSDSPQSLSKFYAGLKEAYPKRRKTVNQDVHINTINLFLCVAFLCVSKEAESDRESANDSEDTSGYDSTASEPLSHMLPCISLESLVLPSPEHMHQAADIWSMCRWIYMLSSVFQKQFYRLGGFRVCHKLIFMIIQKLFRSHKEEQGKKEGDTSVNENQDLNRISQPKRTMKEDLLSLAIKSDPIPSELGSLKKSADSLGKLELQHISSINVEEVSATEAAPEEAKLFTSQESETSLQSIRLLEALLAICLHGARTSQQKMELELPNQNLSVESILFEMRDHLSQSKVIETQLAKPLFDALLRVALGNYSADFEHNDAMTEKSHQSAEELSSQPGDFSEEAEDSQCCSFKLLVEEEGYEADSESNPEDGETQDDGVDLKSETEGFSASSSPNDLLENLTQGEIIYPEICMLELNLLSASKAKLDVLAHVFESFLKIIRQKEKNVFLLMQQGTVKNLLGGFLSILTQDDSDFQACQRVLVDLLVSLMSSRTCSEELTLLLRIFLEKSPCTKILLLGILKIIESDTTMSPSQYLTFPLLHAPNLSNGVSSQKYPGILNSKAMGLLRRARVSRSKKEADRESFPHRLLSSWHIAPVHLPLLGQNCWPHLSEGFSVSLWFNVECIHEAESTTEKGKKIKKRNKSLILPDSSFDGTESDRPEGAEYINPGERLIEEGCIHIISLGSKALMIQVWADPHNATLIFRVCMDSNDDMKAVLLAQVESQENIFLPSKWQHLVLTYLQQPQGKRRIHGKISIWVSGQRKPDVTLDFMLPRKTSLSSDSNKTFCMIGHCLSSQEEFLQLAGKWDLGNLLLFNGAKVGSQEAFYLYACGPNHTSVMPCKYGKPVNDYSKYINKEILRCEQIRELFMTKKDVDIGLLIESLSVVYTTYCPAQYTIYEPVIRLKGQMKTQLSQRPFSSKEVQSILLEPHHLKNLQPTEYKTIQGILHEIGGTGIFVFLFARVVELSSCEETQALALRVILSLIKYNQQRVHELENCNGLSMIHQVLIKQKCIVGFYILKTLLEGCCGEDIIYMNENGEFKLDVDSNAIIQDVKLLEELLLDWKIWSKAEQGVWETLLAALEVLIRADHHQQMFNIKQLLKAQVVHHFLLTCQVLQEYKEGQLTPMPREVCRSFVKIIAEVLGSPPDLELLTIIFNFLLAVHPPTNTYVCHNPTNFYFSLHIDGKIFQEKVRSIMYLRHSSSGGRSLMSPGFMVISPSGFTASPYEGENSSNIIPQQMAAHMLRSRSLPAFPTSSLLTQSQKLTGSLGCSIDRLQNIADTYVATQSKKQNSLGSSDTLKKGKEDAFISSCESAKTVCEMEAVLSAQVSVSDVPKGVLGFPVVKADHKQLGAEPRSEDDSPGDESCPRRPDYLKGLASFQRSHSTIASLGLAFPSQNGSAAVGRWPSLVDRNTDDWENFAYSLGYEPNYNRTASAHSVTEDCLVPICCGLYELLSGVLLILPDVLLEDVMDKLIQADTLLVLVNHPSPAIQQGVIKLLDAYFARASKEQKDKFLKNRGFSLLANQLYLHRGTQELLECFIEMFFGRHIGLDEEFDLEDVRNMGLFQKWSVIPILGLIETSLYDNILLHNALLLLLQILNSCSKVADMLLDNGLLYVLCNTVAALNGLEKNIPMSEYKLLACDIQQLFIAVTIHACSSSGSQYFRVIEDLIVMLGYLQNSKNKRTQNMAVALQLRVLQAAMEFIRTTANHDSENLTDSLQSPSAPHHAVVQKRKSIAGPRKFPLAQTESLLMKMRSVANDELHVMMQRRMSQENPSQATETELAQRLQRLTVLAVNRIIYQEFNSDIIDILRTPENVTQSKTSVFQTEISEENIHHEQSSVFNPFQKEIFTYLVEGFKVSIGSSKASGSKQQWTKILWSCKETFRMQLGRLLVHILSPAHAAQERKQIFEIVHEPNHQEILRDCLSPSLQHGAKLVLYLSELIHNHQGELTEEELGTAELLMNALKLCGHKCIPPSASTKADLIKMIKEEQKKYETEEGVNKAAWQKTVNNNQQSLFQRLDSKSKDISKIAADITQAVSLSQGNERKKVIQHIRGMYKVDLSASRHWQELIQQLTHDRAVWYDPIYYPTSWQLDPTEGPNRERRRLQRCYLTIPNKYLLRDRQKSEDVVKPPLSYLFEDKTHSSFSSTVKDKAASESIRVNRRCISVAPSRETAGELLLGKCGMYFVEDNASDTVESSSLQGELEPASFSWTYEEIKEVHKRWWQLRDNAVEIFLTNGRTLLLAFDNTKVRDDVYHNILTNNLPNLLEYGNITALTNLWYTGQITNFEYLTHLNKHAGRSFNDLMQYPVFPFILADYVSETLDLNDLLIYRNLSKPIAVQYKEKEDRYVDTYKYLEEEYRKGAREDDPMPPVQPYHYGSHYSNSGTVLHFLVRMPPFTKMFLAYQDQSFDIPDRTFHSTNTTWRLSSFESMTDVKELIPEFFYLPEFLVNREGFDFGVRQNGERVNHVNLPPWARNDPRLFILIHRQALESDYVSQNICQWIDLVFGYKQKGKASVQAINVFHPATYFGMDVSAVEDPVQRRALETMIKTYGQTPRQLFHMAHVSRPGAKLNIEGELPAAVGLLVQFAFRETREQVKEITYPSPLSWIKGLKWGEYVGSPSAPVPVVCFSQPHGERFGSLQALPTRAICGLSRNFCLLMTYSKEQGVRSMNSTDIQWSAILSWGYADNILRLKSKQSEPPVNFIQSSQQYQVTSCAWVPDSCQLFTGSKCGVITAYTNRFTSSTPSEIEMETQIHLYGHTEEITSLFVCKPYSILISVSRDGTCIIWDLNRLCYVQSLAGHKSPVTAVSASETSGDIATVCDSAGGGSDLRLWTVNGDLVGHVHCREIICSVAFSNQPEGVSINVIAGGLENGIVRLWSTWDLKPVREITFPKSNKPIISLTFSCDGHHLYTANSDGTVIAWCRKDQQRLKQPMFYSFLSSYAAG.

Residues 148–173 (KITHRYSVRDARKTQLSTSDSEANSD) are disordered. A Phosphoserine modification is found at serine 164. Position 165 is a phosphothreonine (threonine 165). Serine 166 is subject to Phosphoserine. Residues 662–700 (ELSSSLSSPSYRFQGILPSSGSEDLLWKWDALKAYQNFV) form a WD 1 repeat. Residues 1181–1190 (AMTEKSHQSA) are compositionally biased toward basic and acidic residues. Disordered stretches follow at residues 1181-1203 (AMTEKSHQSAEELSSQPGDFSEE) and 1221-1256 (YEADSESNPEDGETQDDGVDLKSETEGFSASSSPND). A compositionally biased stretch (acidic residues) spans 1221–1238 (YEADSESNPEDGETQDDG). A compositionally biased stretch (polar residues) spans 1246 to 1256 (EGFSASSSPND). Phosphoserine is present on residues serine 1509 and serine 1510. One copy of the WD 2 repeat lies at 1582–1626 (SQENIFLPSKWQHLVLTYLQQPQGKRRIHGKISIWVSGQRKPDVT). Phosphoserine is present on residues serine 2105, serine 2124, serine 2213, serine 2217, and serine 2264. Positions 2205-2215 (KQLGAEPRSED) are enriched in basic and acidic residues. The segment at 2205-2224 (KQLGAEPRSEDDSPGDESCP) is disordered. A BEACH-type PH domain is found at 3009-3115 (AASESIRVNR…VRDDVYHNIL (107 aa)). A BEACH domain is found at 3120 to 3422 (PNLLEYGNIT…QLFHMAHVSR (303 aa)). 5 WD repeats span residues 3563-3602 (SQQYQVTSCAWVPDSCQLFTGSKCGVITAYTNRFTSSTPS), 3614-3653 (GHTEEITSLFVCKPYSILISVSRDGTCIIWDLNRLCYVQS), 3656-3699 (GHKS…VGHV), 3700-3744 (HCRE…PVRE), and 3749-3788 (KSNKPIISLTFSCDGHHLYTANSDGTVIAWCRKDQQRLKQ).

As to quaternary structure, interacts with CPAP, LIP8 and ZNF521. In terms of tissue distribution, abundantly expressed in adult and fetal thymus, peripheral blood leukocytes, bone marrow and several regions of the adult brain.

It is found in the cytoplasm. In terms of biological role, adapter protein that regulates and/or fission of intracellular vesicles such as lysosomes. Might regulate trafficking of effectors involved in exocytosis. In cytotoxic T-cells and natural killer (NK) cells, has role in the regulation of size, number and exocytosis of lytic granules. In macrophages and dendritic cells, regulates phagosome maturation by controlling the conversion of early phagosomal compartments into late phagosomes. In macrophages and dendritic cells, specifically involved in TLR3- and TLR4-induced production of pro-inflammatory cytokines by regulating the endosomal TLR3- TICAM1/TRIF and TLR4- TICAM1/TRIF signaling pathways. This is Lysosomal-trafficking regulator (LYST) from Homo sapiens (Human).